A 905-amino-acid chain; its full sequence is Respiratory burst oxidase homolog protein B (905 aa).

2 disordered regions span residues 1-46 (MADL…KTAR) and 69-134 (EVRG…VRKR). The Cytoplasmic segment spans residues 1–355 (MADLEAGMVA…MYFLEENWKR (355 aa)). Positions 29–44 (IPNSGNLGSSNRSTKT) are enriched in polar residues. Gly residues predominate over residues 75 to 84 (EGGSGHGTGF). Residues 91-108 (SPSSKSGKLTSKLRQVTN) show a composition bias toward polar residues. EF-hand-like stretches follow at residues 172–180 (QVDGVLLRS) and 206–217 (RGIVKQVLTKDE). EF-hand domains lie at 229–264 (GFDN…SASA) and 273–308 (RADE…SPSE). 5 residues coordinate Ca(2+): Asp-242, Asn-244, Asp-246, Arg-248, and Glu-253. Residues 356-376 (SWVMTLWISICIALFIWKFIQ) form a helical membrane-spanning segment. Over 377–440 (YRNRAVFGIM…FNDNINFHKV (64 aa)) the chain is Extracellular. In terms of domain architecture, Ferric oxidoreductase spans 395–551 (GAAETLKFNM…HLFVIVYTLL (157 aa)). A helical transmembrane segment spans residues 441 to 461 (IAAGVAVGVALHAGAHLTCDF). Residues 462–496 (PRLLHASDAQYELMKPFFGEKRPPNYWWFVKGTEG) lie on the Cytoplasmic side of the membrane. Residues 497-517 (WTGVVMVVLMAIAFTLAQPWF) form a helical membrane-spanning segment. At 518-539 (RRNKLKDSNPLKKMTGFNAFWF) the chain is on the extracellular side. Residues 540 to 560 (THHLFVIVYTLLFVHGTCLYL) traverse the membrane as a helical segment. The Cytoplasmic segment spans residues 561–568 (SRKWYKKT). The chain crosses the membrane as a helical span at residues 569 to 586 (TWMYLAVPVVLYVSERIL). The FAD-binding FR-type domain maps to 587–715 (RLFRSHDAVG…DGPYGAPAQD (129 aa)). Residues 587–717 (RLFRSHDAVG…PYGAPAQDYR (131 aa)) lie on the Extracellular side of the membrane. Residues 718-738 (EYDVLLLIGLGIGATPLISIV) traverse the membrane as a helical segment. Residues 739-905 (KDVLNHIQGE…TRFDFHKENF (167 aa)) lie on the Cytoplasmic side of the membrane.

Belongs to the RBOH (TC 5.B.1.3) family. Monomer and homodimer, stabilized by swapping the EF-hand motifs. Interacts with GTP-bound RAC1.

Its subcellular location is the membrane. In terms of biological role, calcium-dependent NADPH oxidase that generates superoxide. In Oryza sativa subsp. japonica (Rice), this protein is Respiratory burst oxidase homolog protein B (RBOHB).